Here is a 615-residue protein sequence, read N- to C-terminus: ATP-dependent zinc metalloprotease FtsH (615 aa).

Over 1 to 8 (MAMNKDKP) the chain is Cytoplasmic. Residues 9–29 (WTLYLLAVGLAVLAAVQFGLF) traverse the membrane as a helical segment. The Periplasmic portion of the chain corresponds to 30–104 (SQPAVQAIPY…FSGVVEDNTV (75 aa)). Residues 105 to 125 (ATVMGALMPLLMLLALWYFLF) traverse the membrane as a helical segment. The Cytoplasmic segment spans residues 126-615 (HGLGQKQGLG…ATYVLVDATK (490 aa)). An ATP-binding site is contributed by 198–205 (GPPGTGKT). Position 420 (histidine 420) interacts with Zn(2+). Residue glutamate 421 is part of the active site. The Zn(2+) site is built by histidine 424 and aspartate 497.

This sequence in the central section; belongs to the AAA ATPase family. The protein in the C-terminal section; belongs to the peptidase M41 family. As to quaternary structure, homohexamer. Zn(2+) is required as a cofactor.

It localises to the cell inner membrane. Acts as a processive, ATP-dependent zinc metallopeptidase for both cytoplasmic and membrane proteins. Plays a role in the quality control of integral membrane proteins. In Pseudomonas putida (strain ATCC 700007 / DSM 6899 / JCM 31910 / BCRC 17059 / LMG 24140 / F1), this protein is ATP-dependent zinc metalloprotease FtsH.